The following is a 140-amino-acid chain: uncharacterized protein (140 aa).

This is an uncharacterized protein from Escherichia coli O157:H7.